Here is a 300-residue protein sequence, read N- to C-terminus: ATP synthase gamma chain (300 aa).

It belongs to the ATPase gamma chain family. F-type ATPases have 2 components, CF(1) - the catalytic core - and CF(0) - the membrane proton channel. CF(1) has five subunits: alpha(3), beta(3), gamma(1), delta(1), epsilon(1). CF(0) has three main subunits: a, b and c.

The protein localises to the cell membrane. Produces ATP from ADP in the presence of a proton gradient across the membrane. The gamma chain is believed to be important in regulating ATPase activity and the flow of protons through the CF(0) complex. The polypeptide is ATP synthase gamma chain (Enterococcus hirae (strain ATCC 9790 / DSM 20160 / JCM 8729 / LMG 6399 / NBRC 3181 / NCIMB 6459 / NCDO 1258 / NCTC 12367 / WDCM 00089 / R)).